The primary structure comprises 421 residues: 3-phosphoshikimate 1-carboxyvinyltransferase (421 aa).

3 residues coordinate 3-phosphoshikimate: lysine 19, serine 20, and arginine 24. Lysine 19 serves as a coordination point for phosphoenolpyruvate. Phosphoenolpyruvate is bound by residues glycine 88 and arginine 116. Serine 160, glutamine 162, aspartate 307, and lysine 334 together coordinate 3-phosphoshikimate. Residue glutamine 162 coordinates phosphoenolpyruvate. Aspartate 307 acts as the Proton acceptor in catalysis. Phosphoenolpyruvate contacts are provided by arginine 338 and arginine 380.

This sequence belongs to the EPSP synthase family. In terms of assembly, monomer.

It localises to the cytoplasm. The enzyme catalyses 3-phosphoshikimate + phosphoenolpyruvate = 5-O-(1-carboxyvinyl)-3-phosphoshikimate + phosphate. Its pathway is metabolic intermediate biosynthesis; chorismate biosynthesis; chorismate from D-erythrose 4-phosphate and phosphoenolpyruvate: step 6/7. Catalyzes the transfer of the enolpyruvyl moiety of phosphoenolpyruvate (PEP) to the 5-hydroxyl of shikimate-3-phosphate (S3P) to produce enolpyruvyl shikimate-3-phosphate and inorganic phosphate. This chain is 3-phosphoshikimate 1-carboxyvinyltransferase, found in Thermotoga sp. (strain RQ2).